Reading from the N-terminus, the 125-residue chain is Translation initiation factor 5A (125 aa).

K35 bears the Hypusine mark.

This sequence belongs to the eIF-5A family.

The protein resides in the cytoplasm. In terms of biological role, functions by promoting the formation of the first peptide bond. The sequence is that of Translation initiation factor 5A (eIF5A) from Methanoculleus marisnigri (strain ATCC 35101 / DSM 1498 / JR1).